Here is a 403-residue protein sequence, read N- to C-terminus: S-adenosylmethionine synthase (403 aa).

Histidine 17 serves as a coordination point for ATP. Mg(2+) is bound at residue aspartate 19. Residue glutamate 45 participates in K(+) binding. Positions 58 and 104 each coordinate L-methionine. Positions 104-114 (QSPDIAQGVDT) are flexible loop. Residues 179 to 181 (DGK), 250 to 251 (KF), aspartate 259, 265 to 266 (RK), alanine 282, and lysine 286 contribute to the ATP site. L-methionine is bound at residue aspartate 259. Position 290 (lysine 290) interacts with L-methionine.

This sequence belongs to the AdoMet synthase family. In terms of assembly, homotetramer; dimer of dimers. Requires Mg(2+) as cofactor. K(+) serves as cofactor.

The protein resides in the cytoplasm. The catalysed reaction is L-methionine + ATP + H2O = S-adenosyl-L-methionine + phosphate + diphosphate. It participates in amino-acid biosynthesis; S-adenosyl-L-methionine biosynthesis; S-adenosyl-L-methionine from L-methionine: step 1/1. Functionally, catalyzes the formation of S-adenosylmethionine (AdoMet) from methionine and ATP. The overall synthetic reaction is composed of two sequential steps, AdoMet formation and the subsequent tripolyphosphate hydrolysis which occurs prior to release of AdoMet from the enzyme. The sequence is that of S-adenosylmethionine synthase from Mycobacterium ulcerans (strain Agy99).